Reading from the N-terminus, the 916-residue chain is Isoleucine--tRNA ligase (916 aa).

The 'HIGH' region signature appears at 57 to 67 (PYANGNLHMGH). Residue E554 coordinates L-isoleucyl-5'-AMP. The 'KMSKS' region motif lies at 595 to 599 (KMSKS). Position 598 (K598) interacts with ATP. Positions 885, 888, 905, and 908 each coordinate Zn(2+).

Belongs to the class-I aminoacyl-tRNA synthetase family. IleS type 1 subfamily. As to quaternary structure, monomer. Zn(2+) serves as cofactor.

The protein localises to the cytoplasm. It catalyses the reaction tRNA(Ile) + L-isoleucine + ATP = L-isoleucyl-tRNA(Ile) + AMP + diphosphate. Its function is as follows. Catalyzes the attachment of isoleucine to tRNA(Ile). As IleRS can inadvertently accommodate and process structurally similar amino acids such as valine, to avoid such errors it has two additional distinct tRNA(Ile)-dependent editing activities. One activity is designated as 'pretransfer' editing and involves the hydrolysis of activated Val-AMP. The other activity is designated 'posttransfer' editing and involves deacylation of mischarged Val-tRNA(Ile). The chain is Isoleucine--tRNA ligase from Staphylococcus haemolyticus (strain JCSC1435).